The sequence spans 1262 residues: Histone-lysine N-methyltransferase eggless (1262 aa).

The segment at 1–194 is disordered; it reads MSGQPTAVDC…MEVDQDVEES (194 aa). Composition is skewed to basic and acidic residues over residues 26-41, 50-61, and 81-99; these read ASRE…KGEN, AAKDVEIEELTH, and APDE…KGEN. Residues 157 to 166 are compositionally biased toward low complexity; it reads SSISSPTSES. Over residues 167-179 the composition is skewed to basic and acidic residues; that stretch reads FPEKDEKTNKENE. S215 is modified (phosphoserine). T217 bears the Phosphothreonine mark. Residues 353–420 are a coiled coil; it reads EKSDFSKNKL…LEKVQTTADK (68 aa). Tudor domains are found at residues 529–602 and 629–686; these read RLTI…SEKV and QCTR…RETQ. Positions 743–764 are disordered; the sequence is SSAATPAGGRTNAGGVSTSNSA. The MBD domain occupies 818 to 884; sequence LDSYSPLAKP…DNFDFTPDLK (67 aa). The Pre-SET domain maps to 946–1018; sequence LCCDCEDDCS…NCLNRVVQFS (73 aa). Residues C948, C950, C954, C960, C962, C1000, C1004, C1006, and C1010 each coordinate Zn(2+). The SET domain maps to 1021–1237; that stretch reads MKLQVFKTSN…SGTELTWNYN (217 aa). S-adenosyl-L-methionine-binding positions include 1031-1033, D1069, and Y1071; that span reads RGW. Positions 1086-1097 are enriched in basic and acidic residues; the sequence is EGYESEVDHSDP. The segment at 1086-1148 is disordered; sequence EGYESEVDHS…QSSELDSQER (63 aa). The segment covering 1098–1113 has biased composition (acidic residues); that stretch reads DAEEDNGGPDAEDDDD. A compositionally biased stretch (low complexity) spans 1129–1141; sequence RSGSTQNSSTQSS. S-adenosyl-L-methionine-binding positions include R1191 and 1194-1195; that span reads NH. Zn(2+) is bound by residues C1197, C1250, C1252, and C1257. The Post-SET domain maps to 1246 to 1262; sequence KVLYCQCGAPNCRLRLL.

It belongs to the class V-like SAM-binding methyltransferase superfamily. Histone-lysine methyltransferase family. Suvar3-9 subfamily. As to expression, expressed in ovary (at protein level).

The protein localises to the nucleus. It localises to the chromosome. It carries out the reaction L-lysyl(9)-[histone H3] + 3 S-adenosyl-L-methionine = N(6),N(6),N(6)-trimethyl-L-lysyl(9)-[histone H3] + 3 S-adenosyl-L-homocysteine + 3 H(+). In terms of biological role, histone methyltransferase that specifically trimethylates 'Lys-10' of histone H3 (H3K9me3) in ovary. H3K9me3 represents a specific tag for epigenetic transcriptional repression by recruiting Su(var)205/HP1 to methylated histones. Plays a central role during oogenesis. The sequence is that of Histone-lysine N-methyltransferase eggless (egg) from Drosophila melanogaster (Fruit fly).